The sequence spans 776 residues: Probable E3 ubiquitin-protein ligase HECTD2 (776 aa).

The segment at 1–46 is disordered; sequence MSEAVRVPSPATPLVVAAPAPEERKGKESEREKLPPIVSAGAGATA. The segment covering 7–20 has biased composition (low complexity); sequence VPSPATPLVVAAPA. S9 bears the Phosphoserine mark. Positions 21 to 34 are enriched in basic and acidic residues; the sequence is PEERKGKESEREKL. One can recognise an HECT domain in the interval 437-776; that stretch reads KRADLKKKLK…ISNSEGFGLE (340 aa). C744 (glycyl thioester intermediate) is an active-site residue.

The enzyme catalyses S-ubiquitinyl-[E2 ubiquitin-conjugating enzyme]-L-cysteine + [acceptor protein]-L-lysine = [E2 ubiquitin-conjugating enzyme]-L-cysteine + N(6)-ubiquitinyl-[acceptor protein]-L-lysine.. It functions in the pathway protein modification; protein ubiquitination. E3 ubiquitin-protein ligase which accepts ubiquitin from an E2 ubiquitin-conjugating enzyme in the form of a thioester and then directly transfers the ubiquitin to targeted substrates. In terms of biological role, (Microbial infection) Catalyzes ubiquitination of Botulinum neurotoxin A light chain (LC) of C.botulinum neurotoxin type A (BoNT/A). The sequence is that of Probable E3 ubiquitin-protein ligase HECTD2 from Homo sapiens (Human).